Consider the following 74-residue polypeptide: RNA-binding protein Hfq (74 aa).

Residues 9-69 (DQFLNQLRKD…ISTFAPEKNV (61 aa)) form the Sm domain.

This sequence belongs to the Hfq family. Homohexamer.

RNA chaperone that binds small regulatory RNA (sRNAs) and mRNAs to facilitate mRNA translational regulation in response to envelope stress, environmental stress and changes in metabolite concentrations. Also binds with high specificity to tRNAs. In Geobacillus sp. (strain WCH70), this protein is RNA-binding protein Hfq.